The primary structure comprises 282 residues: Bis(5'-nucleosyl)-tetraphosphatase, symmetrical (282 aa).

It belongs to the Ap4A hydrolase family.

The enzyme catalyses P(1),P(4)-bis(5'-adenosyl) tetraphosphate + H2O = 2 ADP + 2 H(+). Hydrolyzes diadenosine 5',5'''-P1,P4-tetraphosphate to yield ADP. The chain is Bis(5'-nucleosyl)-tetraphosphatase, symmetrical from Salmonella arizonae (strain ATCC BAA-731 / CDC346-86 / RSK2980).